Here is a 297-residue protein sequence, read N- to C-terminus: Probable endonuclease 4 (297 aa).

Histidine 69, histidine 110, glutamate 145, aspartate 179, histidine 182, histidine 214, aspartate 227, histidine 229, and glutamate 259 together coordinate Zn(2+).

Belongs to the AP endonuclease 2 family. Zn(2+) is required as a cofactor.

The catalysed reaction is Endonucleolytic cleavage to 5'-phosphooligonucleotide end-products.. In terms of biological role, endonuclease IV plays a role in DNA repair. It cleaves phosphodiester bonds at apurinic or apyrimidinic (AP) sites, generating a 3'-hydroxyl group and a 5'-terminal sugar phosphate. This Bacillus subtilis (strain 168) protein is Probable endonuclease 4.